Consider the following 366-residue polypeptide: Histidinol-phosphate aminotransferase 2 (366 aa).

The interval 1-21 is disordered; it reads MQVKDQLSLLQPYKPGKSPEQ. Residue Lys-222 is modified to N6-(pyridoxal phosphate)lysine.

This sequence belongs to the class-II pyridoxal-phosphate-dependent aminotransferase family. Histidinol-phosphate aminotransferase subfamily. In terms of assembly, homodimer. Requires pyridoxal 5'-phosphate as cofactor.

It carries out the reaction L-histidinol phosphate + 2-oxoglutarate = 3-(imidazol-4-yl)-2-oxopropyl phosphate + L-glutamate. It participates in amino-acid biosynthesis; L-histidine biosynthesis; L-histidine from 5-phospho-alpha-D-ribose 1-diphosphate: step 7/9. The chain is Histidinol-phosphate aminotransferase 2 from Bacillus cereus (strain ZK / E33L).